Reading from the N-terminus, the 87-residue chain is U3-theraphotoxin-Hhn1a 13 (87 aa).

The N-terminal stretch at 1–24 (MVNMKASMFLTSAGLVPLFVVCYA) is a signal peptide. The propeptide occupies 25–52 (SESEEKEFPKEMLSSIFAVDNDFKQEER). Disulfide bonds link C54–C67, C61–C72, and C66–C79.

It belongs to the neurotoxin 10 (Hwtx-1) family. 51 (Hntx-8) subfamily. Hntx-8 sub-subfamily. As to expression, expressed by the venom gland.

Its subcellular location is the secreted. In terms of biological role, ion channel inhibitor. This chain is U3-theraphotoxin-Hhn1a 13, found in Cyriopagopus hainanus (Chinese bird spider).